Here is an 89-residue protein sequence, read N- to C-terminus: U-scoloptoxin(11)-Sm4a (89 aa).

The signal sequence occupies residues 1 to 17 (MFFKLVLVSAVAIQALS).

Belongs to the scoloptoxin-11 family. Post-translationally, contains 3 disulfide bonds. In terms of tissue distribution, expressed by the venom gland.

It localises to the secreted. This is U-scoloptoxin(11)-Sm4a from Scolopendra morsitans (Tanzanian blue ringleg centipede).